A 264-amino-acid polypeptide reads, in one-letter code: S-adenosylmethionine decarboxylase proenzyme (264 aa).

Catalysis depends on Ser-112, which acts as the Schiff-base intermediate with substrate; via pyruvic acid. Ser-112 bears the Pyruvic acid (Ser); by autocatalysis mark. The active-site Proton acceptor; for processing activity is His-117. The active-site Proton donor; for catalytic activity is Cys-140.

Belongs to the prokaryotic AdoMetDC family. Type 2 subfamily. In terms of assembly, heterooctamer of four alpha and four beta chains arranged as a tetramer of alpha/beta heterodimers. Pyruvate serves as cofactor. In terms of processing, is synthesized initially as an inactive proenzyme. Formation of the active enzyme involves a self-maturation process in which the active site pyruvoyl group is generated from an internal serine residue via an autocatalytic post-translational modification. Two non-identical subunits are generated from the proenzyme in this reaction, and the pyruvate is formed at the N-terminus of the alpha chain, which is derived from the carboxyl end of the proenzyme. The post-translation cleavage follows an unusual pathway, termed non-hydrolytic serinolysis, in which the side chain hydroxyl group of the serine supplies its oxygen atom to form the C-terminus of the beta chain, while the remainder of the serine residue undergoes an oxidative deamination to produce ammonia and the pyruvoyl group blocking the N-terminus of the alpha chain.

The enzyme catalyses S-adenosyl-L-methionine + H(+) = S-adenosyl 3-(methylsulfanyl)propylamine + CO2. Its pathway is amine and polyamine biosynthesis; S-adenosylmethioninamine biosynthesis; S-adenosylmethioninamine from S-adenosyl-L-methionine: step 1/1. Catalyzes the decarboxylation of S-adenosylmethionine to S-adenosylmethioninamine (dcAdoMet), the propylamine donor required for the synthesis of the polyamines spermine and spermidine from the diamine putrescine. This chain is S-adenosylmethionine decarboxylase proenzyme, found in Shigella boydii serotype 4 (strain Sb227).